The primary structure comprises 524 residues: Ribonuclease Y (524 aa).

The helical transmembrane segment at 3–23 threads the bilayer; sequence IVINLFLLVPASIVFFAAGFF. Residues 96–127 form a disordered region; the sequence is QQREGQLKKQAQDNRDMERRLQDQRKENEQVQ. The span at 100–124 shows a compositional bias: basic and acidic residues; the sequence is GQLKKQAQDNRDMERRLQDQRKENE. The region spanning 214–280 is the KH domain; the sequence is ALSVVHIQTD…KLTLQKLLSE (67 aa). The 93-residue stretch at 340-432 folds into the HD domain; the sequence is LLQHSREVAM…VDAANVISLS (93 aa).

Belongs to the RNase Y family.

Its subcellular location is the cell membrane. Endoribonuclease that initiates mRNA decay. The polypeptide is Ribonuclease Y (Chlorobium phaeovibrioides (strain DSM 265 / 1930) (Prosthecochloris vibrioformis (strain DSM 265))).